We begin with the raw amino-acid sequence, 294 residues long: HTH-type transcriptional regulator XapR (294 aa).

One can recognise an HTH lysR-type domain in the interval 7–64 (TDLKLLRYFLAVAEELHFGRAAARLNMSQPPLSIHIKELENQLGTQLFIRHSRSVVLT). The segment at residues 24–43 (FGRAAARLNMSQPPLSIHIK) is a DNA-binding region (H-T-H motif).

Belongs to the LysR transcriptional regulatory family.

In terms of biological role, positive regulator required for the expression of xapA and xapB. Binds to the inducer xanthosine. The chain is HTH-type transcriptional regulator XapR (xapR) from Escherichia coli (strain K12).